The chain runs to 861 residues: ToMV resistance protein Tm-2(2) (861 aa).

The stretch at 63–83 (VKNLLKDIQELAGDVEDLLDD) forms a coiled coil. In terms of domain architecture, NB-ARC spans 162 to 388 (DDFNMLQAKL…LESMGHKVQD (227 aa)). Residue 185–192 (GMPGLGKT) participates in ATP binding. LRR repeat units follow at residues 225–248 (LDIAKQIGLTEQKMKENLEDNLRS), 305–327 (LHALQPLESEKSFELFTKKIFNF), 388–411 (DGCAKVLALSYNDLPIASRPCFLY), 449–472 (LAEDVLNDLVSRNLIQLAKRTYNG), 510–536 (VARLRRITFYSDNVMIEFFRSNPKLEK), 585–608 (MTCLRYLRLEGNICGKLPNSIVKL), 609–631 (TRLETIDIDRRSLIQPPSGVWES), 652–680 (ISSFYPNIYSLHPNNLQTLMWIPDKFFEP), 689–710 (LRKLGILGVSNSTVKMLSIFSP), 712–735 (LKALEVLKLSFSSDPSEQIKLSSY), 736–758 (PHIAKLHLNVNRTMALNSQSFPP), 784–810 (LRKLKMFICKYNEEKMDLSGEANGYSF), and 811–835 (PQLEVLHIHSPNGLSEVTCTDDVSM).

Belongs to the disease resistance NB-LRR family. As to quaternary structure, (Microbial infection) Interacts with tobamoviruses mouvement protein (e.g. tobacco mosaic virus (TMV) MP, AC P03583) at the plasma membrane; this interaction triggers defense responses leading to programmed cell death. In terms of assembly, binds to HSP90 proteins (e.g. HSP90-1 and Nicotiana benthamiana HSP90-1); this interaction seems required for defense responses toward tobamoviruses.

It localises to the cell membrane. Inhibitor of viral mouvements which confers resistance to some tobamoviruses including tomato mosaic virus (ToMV) (e.g. strains L, B7 and ToMV1-2) and tobacco mosaic virus (TMV), but not to resistance-breaking isolates (e.g. LIIA and ToMV2(2)) ToMV and tomato brown rugose fruit virus (ToBRFV). Elicits a hypersensitive reaction in response to avirulent (Avr) movement proteins from resistance inducing tobamoviruses (e.g. ToMV and TMV) strains, thus leading to programmed cell death; this local extreme resistance requires rbcS. This chain is ToMV resistance protein Tm-2(2), found in Solanum lycopersicum (Tomato).